The sequence spans 1025 residues: Leucyl-cystinyl aminopeptidase (1025 aa).

The residue at position 1 (Met1) is an N-acetylmethionine. Residues 1-110 (MEPFTNDRLQ…GACSVPSART (110 aa)) lie on the Cytoplasmic side of the membrane. The Dileucine internalization motif motif lies at 53–54 (LL). Tyr70 carries the post-translational modification Phosphotyrosine. Positions 76–77 (LL) match the Dileucine internalization motif motif. Phosphoserine occurs at positions 80 and 91. Residues 96–101 (RQSPDG) form a tankyrase binding region. The helical; Signal-anchor for type II membrane protein transmembrane segment at 111–131 (MVVCAFVIVVAVSVIMVIYLL) threads the bilayer. At 132–1025 (PRCTFTKEGC…KNLKSLTWWL (894 aa)) the chain is on the extracellular side. 5 N-linked (GlcNAc...) asparagine glycosylation sites follow: Asn145, Asn184, Asn215, Asn256, and Asn266. Glu295 provides a ligand contact to substrate. N-linked (GlcNAc...) asparagine glycans are attached at residues Asn368 and Asn374. Substrate is bound at residue 428 to 432 (GAMEN). N-linked (GlcNAc...) asparagine glycosylation is present at Asn448. Residue His464 coordinates Zn(2+). Glu465 (proton acceptor) is an active-site residue. Positions 468 and 487 each coordinate Zn(2+). N-linked (GlcNAc...) asparagine glycosylation is found at Asn525, Asn578, Asn598, Asn664, Asn682, Asn760, Asn834, Asn850, and Asn989.

The protein belongs to the peptidase M1 family. As to quaternary structure, homodimer. Binds tankyrases 1 and 2. The cofactor is Zn(2+). The pregnancy serum form is derived from the membrane-bound form by proteolytic processing. In terms of processing, N-glycosylated. Highly expressed in placenta, heart, kidney and small intestine. Detected at lower levels in neuronal cells in the brain, in skeletal muscle, spleen, liver, testes and colon.

The protein localises to the cell membrane. Its subcellular location is the secreted. It carries out the reaction Release of an N-terminal amino acid, Cys-|-Xaa-, in which the half-cystine residue is involved in a disulfide loop, notably in oxytocin or vasopressin. Hydrolysis rates on a range of aminoacyl arylamides exceed that for the cystinyl derivative, however.. Functionally, release of an N-terminal amino acid, cleaves before cysteine, leucine as well as other amino acids. Degrades peptide hormones such as oxytocin, vasopressin and angiotensin III, and plays a role in maintaining homeostasis during pregnancy. May be involved in the inactivation of neuronal peptides in the brain. Cleaves Met-enkephalin and dynorphin. Binds angiotensin IV and may be the angiotensin IV receptor in the brain. This is Leucyl-cystinyl aminopeptidase (LNPEP) from Homo sapiens (Human).